The chain runs to 249 residues: 1-(5-phosphoribosyl)-5-[(5-phosphoribosylamino)methylideneamino] imidazole-4-carboxamide isomerase (249 aa).

Aspartate 11 acts as the Proton acceptor in catalysis. The active-site Proton donor is the aspartate 132.

The protein belongs to the HisA/HisF family.

It localises to the cytoplasm. The catalysed reaction is 1-(5-phospho-beta-D-ribosyl)-5-[(5-phospho-beta-D-ribosylamino)methylideneamino]imidazole-4-carboxamide = 5-[(5-phospho-1-deoxy-D-ribulos-1-ylimino)methylamino]-1-(5-phospho-beta-D-ribosyl)imidazole-4-carboxamide. It participates in amino-acid biosynthesis; L-histidine biosynthesis; L-histidine from 5-phospho-alpha-D-ribose 1-diphosphate: step 4/9. In Nitrobacter winogradskyi (strain ATCC 25391 / DSM 10237 / CIP 104748 / NCIMB 11846 / Nb-255), this protein is 1-(5-phosphoribosyl)-5-[(5-phosphoribosylamino)methylideneamino] imidazole-4-carboxamide isomerase.